Consider the following 552-residue polypeptide: Protein FAM234A (552 aa).

Positions 1–40 (MMDDKDLEAEIHPLKNEDKKSQENLGNLPKTEDNLKNKPV) are disordered. Residues 1-49 (MMDDKDLEAEIHPLKNEDKKSQENLGNLPKTEDNLKNKPVPSRLSRCRT) lie on the Cytoplasmic side of the membrane. Residues 8 to 22 (EAEIHPLKNEDKKSQ) show a composition bias toward basic and acidic residues. Phosphoserine is present on Ser21. A helical; Signal-anchor for type II membrane protein transmembrane segment spans residues 50-70 (VAFFLSLFICLFVVFVLSFII). At 71-552 (PCPDRPSSED…FSRLRYRSEV (482 aa)) the chain is on the extracellular side. Residues Asn116, Asn119, Asn314, and Asn473 are each glycosylated (N-linked (GlcNAc...) asparagine).

The protein belongs to the FAM234 family.

It localises to the membrane. This Rattus norvegicus (Rat) protein is Protein FAM234A (Fam234a).